The chain runs to 395 residues: Phosphoprotein (395 aa).

2 disordered regions span residues 31–109 and 126–214; these read VETV…DTQL and NKSS…PASV. Positions 65–74 are enriched in basic and acidic residues; that stretch reads TPDRQNRSDK. Polar residues-rich tracts occupy residues 75–98, 146–168, and 203–212; these read QPSTPEQMTPQNSPPATSTDQPPT, LPTQQQGSQPSRGNSQERPQNRA, and SGQSQDNTPA. The multimerization stretch occupies residues 222–285; that stretch reads DFVQAMMSMM…LGMMKILDPG (64 aa).

This sequence belongs to the rubulavirus/avulavirus P protein family. In terms of assembly, homotetramer. Interacts (via multimerization domain) with polymerase L; this interaction forms the polymerase L-P complex. Interacts (via N-terminus) with N0 (via Ncore); this interaction allows P to chaperon N0 to avoid N polymerization before encapsidation. Interacts (via C-terminus) with N-RNA template; this interaction positions the polymerase on the template for both transcription and replication.

Its function is as follows. Essential cofactor of the RNA polymerase L that plays a central role in the transcription and replication by forming the polymerase complex with RNA polymerase L and recruiting L to the genomic N-RNA template for RNA synthesis. Also plays a central role in the encapsidation of nascent RNA chains by forming the encapsidation complex with the nucleocapsid protein N (N-P complex). Acts as a chaperone for newly synthesized free N protein, so-called N0, allowing encapsidation of nascent RNA chains during replication. The nucleoprotein protein N prevents excessive phosphorylation of P, which leads to down-regulation of viral transcription/ replication. Participates, together with N, in the formation of viral factories (viroplasms), which are large inclusions in the host cytoplasm where replication takes place. The protein is Phosphoprotein (P/C) of Gallus gallus (Chicken).